The primary structure comprises 161 residues: Nucleotide-binding protein Spea_3114 (161 aa).

The protein belongs to the YajQ family.

Nucleotide-binding protein. This is Nucleotide-binding protein Spea_3114 from Shewanella pealeana (strain ATCC 700345 / ANG-SQ1).